The following is a 364-amino-acid chain: Aminomethyltransferase (364 aa).

The protein belongs to the GcvT family. The glycine cleavage system is composed of four proteins: P, T, L and H.

It catalyses the reaction N(6)-[(R)-S(8)-aminomethyldihydrolipoyl]-L-lysyl-[protein] + (6S)-5,6,7,8-tetrahydrofolate = N(6)-[(R)-dihydrolipoyl]-L-lysyl-[protein] + (6R)-5,10-methylene-5,6,7,8-tetrahydrofolate + NH4(+). Its function is as follows. The glycine cleavage system catalyzes the degradation of glycine. The chain is Aminomethyltransferase from Shewanella baltica (strain OS155 / ATCC BAA-1091).